We begin with the raw amino-acid sequence, 274 residues long: Ubiquinone biosynthesis O-methyltransferase, mitochondrial (274 aa).

Residues 1–30 constitute a mitochondrion transit peptide; the sequence is MNSMNILNKVKNVKSYTRLVRQGFLSQQRN. Residues arginine 65, glycine 88, aspartate 109, and methionine 154 each coordinate S-adenosyl-L-methionine. Positions 155, 158, and 159 each coordinate Mg(2+).

This sequence belongs to the class I-like SAM-binding methyltransferase superfamily. UbiG/COQ3 family. In terms of assembly, component of a multi-subunit COQ enzyme complex, composed of at least coq3, coq4, coq5, coq6, coq7 and coq9. Mg(2+) is required as a cofactor.

Its subcellular location is the mitochondrion inner membrane. It carries out the reaction 3,4-dihydroxy-5-(all-trans-decaprenyl)benzoate + S-adenosyl-L-methionine = 4-hydroxy-3-methoxy-5-(all-trans-decaprenyl)benzoate + S-adenosyl-L-homocysteine + H(+). The enzyme catalyses a 3-demethylubiquinone + S-adenosyl-L-methionine = a ubiquinone + S-adenosyl-L-homocysteine. The catalysed reaction is 3-demethylubiquinol-10 + S-adenosyl-L-methionine = ubiquinol-10 + S-adenosyl-L-homocysteine + H(+). It functions in the pathway cofactor biosynthesis; ubiquinone biosynthesis. O-methyltransferase required for two non-consecutive steps during ubiquinone biosynthesis. Catalyzes the 2 O-methylation of 3,4-dihydroxy-5-(all-trans-decaprenyl)benzoic acid into 4-hydroxy-3-methoxy-5-(all-trans-decaprenyl)benzoic acid. Also catalyzes the last step of ubiquinone biosynthesis by mediating methylation of 3-demethylubiquinone into ubiquinone. Also able to mediate the methylation of 3-demethylubiquinol-10 into ubiquinol-10. The protein is Ubiquinone biosynthesis O-methyltransferase, mitochondrial of Schizosaccharomyces pombe (strain 972 / ATCC 24843) (Fission yeast).